The sequence spans 2111 residues: Mycocerosic acid synthase-like polyketide synthase (2111 aa).

The signal sequence occupies residues 1-15 (MTQNCVAPVAIIGMA). Cysteine 16 carries N-palmitoyl cysteine lipidation. Cysteine 16 carries the S-diacylglycerol cysteine lipid modification. The Ketosynthase family 3 (KS3) domain occupies 16 to 428 (CRLPGAINSP…GTNVHAVLEQ (413 aa)). Residue cysteine 178 is the Acyl-thioester intermediate; for beta-ketoacyl synthase activity of the active site. Catalysis depends on for beta-ketoacyl synthase activity residues histidine 313 and histidine 349. Residues 430-537 (PESPAETAAE…MPQQAVTNDD (108 aa)) are linker domain (LD). An acyltransferase (AT) region spans residues 538 to 837 (RGPVWVFSGQ…LAVFAAMRRQ (300 aa)). The active-site Acyl-ester intermediate; for acyltransferase activity is serine 629. Residues 896–1176 (PSVSVHPLLG…LSAMGLQLGT (281 aa)) form a dehydratase (DH) region. An N-terminal hotdog fold region spans residues 901–1025 (HPLLGSHVVL…GDVDAERPAA (125 aa)). One can recognise a PKS/mFAS DH domain in the interval 901–1183 (HPLLGSHVVL…LGTGNSDKAE (283 aa)). Histidine 934 functions as the Proton acceptor; for dehydratase activity in the catalytic mechanism. Residues 1036–1183 (PNRVDGDELR…LGTGNSDKAE (148 aa)) are C-terminal hotdog fold. The active-site Proton donor; for dehydratase activity is aspartate 1100. Residues 1215–1391 (SWLVILAGDD…SPEDETAWRD (177 aa)) form a pseudo beta-ketoacyl reductase (PsiKR) region. The segment at 1419–1743 (EGMRLVVRNP…QHTGKLVIDI (325 aa)) is enoylreductase (ER). Residues 1765–2008 (GAYVITGGLG…RSPFAELFLA (244 aa)) are beta-ketoacyl reductase (KR). NADP(+) contacts are provided by residues 1773–1776 (LGGL), 1796–1799 (SRSA), 1824–1825 (DI), and 1902–1903 (FS). A Carrier domain is found at 2029-2104 (EEWPTHLRRL…QRLCEMLDTD (76 aa)). Serine 2064 carries the post-translational modification O-(pantetheine 4'-phosphoryl)serine.

In terms of assembly, homodimer.

It localises to the cell membrane. The protein operates within lipid metabolism; fatty acid biosynthesis. Functionally, polyketide synthase involved in the biosynthesis of 2,4-dimethyl-2-eicosenoic acid, a lipid component of the lipooligosaccharides (LOS) which are not located at the bacterial surface but rather in deeper compartments of the cell envelope of M.smegmatis. This chain is Mycocerosic acid synthase-like polyketide synthase, found in Mycolicibacterium smegmatis (strain ATCC 700084 / mc(2)155) (Mycobacterium smegmatis).